The sequence spans 109 residues: Phosphoribosyl-ATP pyrophosphatase (109 aa).

Belongs to the PRA-PH family.

The protein localises to the cytoplasm. It catalyses the reaction 1-(5-phospho-beta-D-ribosyl)-ATP + H2O = 1-(5-phospho-beta-D-ribosyl)-5'-AMP + diphosphate + H(+). It participates in amino-acid biosynthesis; L-histidine biosynthesis; L-histidine from 5-phospho-alpha-D-ribose 1-diphosphate: step 2/9. In Paramagnetospirillum magneticum (strain ATCC 700264 / AMB-1) (Magnetospirillum magneticum), this protein is Phosphoribosyl-ATP pyrophosphatase.